Consider the following 150-residue polypeptide: MPIVDSGSVAPLSAAEKTKIRSAWAPVYSNYETSGVDILVKFFTSTPAAQEFFPKFKGMTSADQLKKSADVRWHAERIINAVNDAVASMDDTEKMSMKLRDLSGKHAKSFQVDPQYFKVLAAVIADTVAAGDAGFEKLMSMICILLRSAY.

Residues 11–150 (PLSAAEKTKI…MICILLRSAY (140 aa)) form the Globin domain. Residues H74 and H106 each coordinate heme b.

Belongs to the globin family. As to quaternary structure, monomer.

This is Globin from Lampetra fluviatilis (European river lamprey).